The sequence spans 82 residues: U-scoloptoxin(21)-Sm3a (82 aa).

The N-terminal stretch at 1–21 (MKIIALLLMVFLDFIIVNXAE) is a signal peptide.

This sequence belongs to the scoloptoxin-21 family. Expressed by the venom gland.

The protein resides in the secreted. This Scolopendra morsitans (Tanzanian blue ringleg centipede) protein is U-scoloptoxin(21)-Sm3a.